The sequence spans 564 residues: CTP synthase (564 aa).

Residues 1–265 are amidoligase domain; that stretch reads MTKFVFVTGG…DEIVCHRLGI (265 aa). CTP is bound at residue Ser13. Ser13 lines the UTP pocket. Residues 14–19 and Asp71 contribute to the ATP site; that span reads SLGKGI. Residues Asp71 and Glu139 each contribute to the Mg(2+) site. CTP is bound by residues 146–148, 186–191, and Lys222; these read DIE and KTKPTQ. UTP-binding positions include 186–191 and Lys222; that span reads KTKPTQ. The Glutamine amidotransferase type-1 domain occupies 290 to 543; the sequence is SIALVGKYVD…VRAAISFADK (254 aa). L-glutamine is bound at residue Gly351. Residue Cys378 is the Nucleophile; for glutamine hydrolysis of the active site. L-glutamine contacts are provided by residues 379–382, Glu402, and Arg469; that span reads LGMQ. Catalysis depends on residues His516 and Glu518.

The protein belongs to the CTP synthase family. As to quaternary structure, homotetramer.

It catalyses the reaction UTP + L-glutamine + ATP + H2O = CTP + L-glutamate + ADP + phosphate + 2 H(+). It carries out the reaction L-glutamine + H2O = L-glutamate + NH4(+). The enzyme catalyses UTP + NH4(+) + ATP = CTP + ADP + phosphate + 2 H(+). Its pathway is pyrimidine metabolism; CTP biosynthesis via de novo pathway; CTP from UDP: step 2/2. With respect to regulation, allosterically activated by GTP, when glutamine is the substrate; GTP has no effect on the reaction when ammonia is the substrate. The allosteric effector GTP functions by stabilizing the protein conformation that binds the tetrahedral intermediate(s) formed during glutamine hydrolysis. Inhibited by the product CTP, via allosteric rather than competitive inhibition. Its function is as follows. Catalyzes the ATP-dependent amination of UTP to CTP with either L-glutamine or ammonia as the source of nitrogen. Regulates intracellular CTP levels through interactions with the four ribonucleotide triphosphates. This is CTP synthase from Nitrosomonas eutropha (strain DSM 101675 / C91 / Nm57).